Reading from the N-terminus, the 329-residue chain is Mitochondrial substrate carrier family protein W (329 aa).

Residues 1 to 39 (MTTNNSNDNNKRYGIIKQQLQQQQQQHHQQHEQHSRLVE) are Mitochondrial intermembrane-facing. 3 Solcar repeats span residues 34–119 (HSRL…CKEL), 133–221 (ESPL…FKSI), and 231–321 (LGIV…IKKF). Residues 40–60 (MTAGCGAGFMASLFTTPLDVI) traverse the membrane as a helical segment. The Mitochondrial matrix segment spans residues 61–90 (KTTLQVDNSSNKTIMSTVKSILDRKGGVKN). Residues 91-111 (LYLGLKPTLVGQIPSWAVYFS) form a helical membrane-spanning segment. Over 112 to 135 (TYTFCKELFTKENDKHSLLEKESP) the chain is Mitochondrial intermembrane. A helical membrane pass occupies residues 136–156 (LIFMTSAIIAGAATSICTSPI). At 157 to 193 (WLIKTRFITQEMVGRQKKYRGIVHSMVSIYHEEGFRG) the chain is on the mitochondrial matrix side. A helical transmembrane segment spans residues 194–214 (LYKGLGPSLLGVLHVGVQFPL). Over 215–230 (YEKFKSILKEKNKNKE) the chain is Mitochondrial intermembrane. Residues 231–251 (LGIVEIMIASSVSKIIASVVA) traverse the membrane as a helical segment. At 252–296 (YPHEVLRARSQDSSPDSPNRTYRGNIIQMFKQIVREEGWRGLYRG) the chain is on the mitochondrial matrix side. The helical transmembrane segment at 297-315 (MGVNLLRVTPSCVITFTSY) threads the bilayer. Over 316-329 (EYIKKFLSQNQNHF) the chain is Mitochondrial intermembrane.

This sequence belongs to the mitochondrial carrier (TC 2.A.29) family.

Its subcellular location is the mitochondrion inner membrane. Functionally, mitochondrial solute carriers shuttle metabolites, nucleotides, and cofactors through the mitochondrial inner membrane. This chain is Mitochondrial substrate carrier family protein W (mcfW), found in Dictyostelium discoideum (Social amoeba).